Reading from the N-terminus, the 645-residue chain is Glucans biosynthesis glucosyltransferase H (645 aa).

A disordered region spans residues 1–28; the sequence is MDGTVTLSPAPTDLPPVSSLDAGQPTLP. 7 helical membrane-spanning segments follow: residues 64-84, 98-118, 423-443, 465-485, 504-524, 558-578, and 580-600; these read LIGGTLTATAVAVWVMLSVLW, LFVLLFAWIAMSFASAVAGFI, APMWGMLMLVGIGIPLAGAGI, AIWIFVCTMFVLLAPKLLGYI, ALSILLETVLAALMAPVVMYL, SYGGLSVFGLFMGTLAYLVSP, and LAAWMAPVIVGMVVSIPVVAV.

Belongs to the glycosyltransferase 2 family. OpgH subfamily.

It localises to the cell inner membrane. Its pathway is glycan metabolism; osmoregulated periplasmic glucan (OPG) biosynthesis. Involved in the biosynthesis of osmoregulated periplasmic glucans (OPGs). The sequence is that of Glucans biosynthesis glucosyltransferase H from Xanthomonas campestris pv. campestris (strain B100).